A 146-amino-acid polypeptide reads, in one-letter code: Hemoglobin subunit beta (146 aa).

Valine 1 is modified (N-acetylvaline; partial). The region spanning 2 to 146 is the Globin domain; the sequence is HLTDAEKAAV…VANALAHKYH (145 aa). At threonine 12 the chain carries Phosphothreonine. N6-acetyllysine is present on lysine 59. Histidine 63 contributes to the heme b binding site. The residue at position 82 (lysine 82) is an N6-acetyllysine. Heme b is bound at residue histidine 92. Cysteine 93 carries the S-nitrosocysteine modification. Residue lysine 144 is modified to N6-acetyllysine.

The protein belongs to the globin family. In terms of assembly, heterotetramer of two alpha chains and two beta chains. In terms of tissue distribution, red blood cells.

Its function is as follows. Involved in oxygen transport from the lung to the various peripheral tissues. The protein is Hemoglobin subunit beta (HBB) of Procavia capensis habessinica (Abyssinian hyrax).